Reading from the N-terminus, the 345-residue chain is MAKEIENLWREVRELSLGTKIDRFDSQPSPVKFLRNYVSQSKPCVISKAITHWPALKLWSDPAYLTGALSDDVVSLHLTPNGCADAVTGDSDLCFASAHVEKVLFPEALKVVQSSCKGLKVGYLQQQNDCFRTEYSTVALDCDGDIEWATEAFGCSPEAVNLWIGTDDSVTSFHKDHYENLYAVVSGEKHFLLLPPTDVHRLYIEQYPAANYSYHRDTDAFKLEVEEPVRHVPWSSVDPYPSPEKEASERLKFPLFFDGPKPFHCTVKAGEVLYLPSMWFHHVSQTPGDGGYTIAVNYWYDMQFDIKYAYFNFLQSLLYKSSSLNPVLSWREDEDSESSDAEIAP.

The JmjC domain maps to G122–Q315. Positions 174, 176, and 281 each coordinate Fe cation.

It belongs to the JARID1 histone demethylase family. It depends on Fe(2+) as a cofactor. In terms of tissue distribution, expressed ubiquitously including in vasculatures, leaves, siliques, roots and inflorescences. Present in the root meristem. Accumulates in cotyledons and root tips of young seedlings.

The protein resides in the nucleus. It localises to the cytoplasm. Its subcellular location is the endoplasmic reticulum. The catalysed reaction is N(6),N(6),N(6)-trimethyl-L-lysyl(27)-[histone H3] + 2-oxoglutarate + O2 = N(6),N(6)-dimethyl-L-lysyl(27)-[histone H3] + formaldehyde + succinate + CO2. It catalyses the reaction N(6),N(6)-dimethyl-L-lysyl(27)-[histone H3] + 2-oxoglutarate + O2 = N(6)-methyl-L-lysyl(27)-[histone H3] + formaldehyde + succinate + CO2. It carries out the reaction N(6),N(6),N(6)-trimethyl-L-lysyl(27)-[histone H3] + 2 2-oxoglutarate + 2 O2 = N(6)-methyl-L-lysyl(27)-[histone H3] + 2 formaldehyde + 2 succinate + 2 CO2. In terms of biological role, histone demethylase that demethylates 'Lys-27' (H3K27me) of histone H3 with a specific activity for H3K27me3 and H3K27me2, and involved in the regulation of gene expression. No activity on H3K27me1. Together with JMJ30, regulates the flowering-repressor FLOWERING LOCUS C (FLC) locus by removing the repressive histone modification H3 lysine 27 trimethylation (H3K27me3), especially at elevated temperatures (e.g. 29 degrees Celsius), thus preventing extreme precocious flowering. JMJ30 and JMJ32 are regulators involved in the integration of abscisic acid (ABA) and brassinosteroids (BR) signaling pathways. Together with JMJ30, controls ABA-mediated growth arrest during the post-germination stage in unfavorable conditions, and responses to ABA during root development, via the removal of repressive histone mark (H3K27me3) from the SnRK2.8 promoter, thus promoting SnRK2.8 expression and subsequent kinase-dependent ABI3 activation. In addition, removes the repressive histone marks (H3K27me3) from the BZR1 locus in response to stress and ABA, thus activating the BR signaling pathway which, in turn, inhibits the ABA signaling pathway. In Arabidopsis thaliana (Mouse-ear cress), this protein is Lysine-specific demethylase JMJ32.